The sequence spans 299 residues: Taste receptor type 2 member 19 (299 aa).

Residue methionine 1 is a topological domain, extracellular. Residues 2-22 (MCFLLIILSILVVFAFVLGNF) traverse the membrane as a helical segment. Topologically, residues 23–55 (SNGFIALVNVIDWVNTRKISSADQILTALVVSR) are cytoplasmic. A helical transmembrane segment spans residues 56-76 (IGLLWVMLFLWYATVFNSALY). The Extracellular portion of the chain corresponds to 77–87 (GLEVRIVASNA). A helical membrane pass occupies residues 88 to 108 (WAVMNHFSIWLAASLSIFCLL). Topologically, residues 109–127 (KIANFSNLIFLHLKKRIKS) are cytoplasmic. A helical transmembrane segment spans residues 128–148 (VVLVILLGPLVFLICNLAVIT). Residues 149–181 (MDERVWTKEYEGNVTWKIKLRNAIQLSSLTVTT) lie on the Extracellular side of the membrane. N-linked (GlcNAc...) asparagine glycosylation occurs at asparagine 161. The helical transmembrane segment at 182 to 202 (LANLIPFTLSLICFLLLICSL) threads the bilayer. Over 203-226 (CKHLKKMRLHSKGSQDPSTKVHIK) the chain is Cytoplasmic. The helical transmembrane segment at 227 to 247 (ALQTVTSFLMLFAIYFLCIIT) threads the bilayer. Residues 248–259 (STWNLRTQQSKL) are Extracellular-facing. Residues 260-280 (VLLLCQTVAIMYPSFHSFILI) traverse the membrane as a helical segment. Topologically, residues 281–299 (MGSRKLKQTFLSVLWQMTR) are cytoplasmic.

It belongs to the G-protein coupled receptor T2R family.

Its subcellular location is the membrane. Functionally, receptor that may play a role in the perception of bitterness and is gustducin-linked. May play a role in sensing the chemical composition of the gastrointestinal content. The activity of this receptor may stimulate alpha gustducin, mediate PLC-beta-2 activation and lead to the gating of TRPM5. This is Taste receptor type 2 member 19 (TAS2R19) from Pan paniscus (Pygmy chimpanzee).